We begin with the raw amino-acid sequence, 502 residues long: Glycerol kinase (502 aa).

Residue threonine 14 participates in ADP binding. ATP contacts are provided by threonine 14, threonine 15, and serine 16. Threonine 14 is a sn-glycerol 3-phosphate binding site. Arginine 18 is a binding site for ADP. Positions 84, 85, and 136 each coordinate sn-glycerol 3-phosphate. Positions 84, 85, and 136 each coordinate glycerol. Residue histidine 232 is modified to Phosphohistidine; by HPr. Position 246 (aspartate 246) interacts with sn-glycerol 3-phosphate. 2 residues coordinate glycerol: aspartate 246 and glutamine 247. ADP is bound by residues threonine 268 and glycine 311. Positions 268, 311, 315, and 412 each coordinate ATP. Residues glycine 412 and asparagine 416 each contribute to the ADP site.

The protein belongs to the FGGY kinase family. As to quaternary structure, homotetramer and homodimer (in equilibrium). In terms of processing, the phosphoenolpyruvate-dependent sugar phosphotransferase system (PTS), including enzyme I, and histidine-containing protein (HPr) are required for the phosphorylation, which leads to the activation of the enzyme.

The enzyme catalyses glycerol + ATP = sn-glycerol 3-phosphate + ADP + H(+). It participates in polyol metabolism; glycerol degradation via glycerol kinase pathway; sn-glycerol 3-phosphate from glycerol: step 1/1. With respect to regulation, activated by phosphorylation and inhibited by fructose 1,6-bisphosphate (FBP). Its function is as follows. Key enzyme in the regulation of glycerol uptake and metabolism. Catalyzes the phosphorylation of glycerol to yield sn-glycerol 3-phosphate. In Streptococcus gordonii (strain Challis / ATCC 35105 / BCRC 15272 / CH1 / DL1 / V288), this protein is Glycerol kinase.